Consider the following 421-residue polypeptide: Acetylglutamate kinase (421 aa).

Residues 1–252 are acetylglutamate kinase; sequence MASTKEISQY…PLESSVSITR (252 aa). Substrate-binding positions include 59–60, Arg81, and Asn170; that span reads AG. One can recognise an N-acetyltransferase domain in the interval 274–420; it reads ERVIRATTWK…HCAQHPPTLI (147 aa).

It in the N-terminal section; belongs to the acetylglutamate kinase family. ArgB subfamily.

The protein localises to the cytoplasm. The enzyme catalyses N-acetyl-L-glutamate + ATP = N-acetyl-L-glutamyl 5-phosphate + ADP. It participates in amino-acid biosynthesis; L-arginine biosynthesis; N(2)-acetyl-L-ornithine from L-glutamate: step 2/4. This Xylella fastidiosa (strain 9a5c) protein is Acetylglutamate kinase (argB).